A 593-amino-acid chain; its full sequence is Tyrosine-protein phosphatase non-receptor type 9 (593 aa).

An N-acetylmethionine modification is found at methionine 1. The segment at 1–21 (MEPATAPRPDMAPELTPEEEQ) is disordered. The region spanning 84 to 243 (EEPLRSEILS…NLGGYIKIDL (160 aa)) is the CRAL-TRIO domain. Residues 303 to 574 (IYEEYEDIRR…YFCYKAILEF (272 aa)) form the Tyrosine-protein phosphatase domain. Substrate-binding positions include aspartate 470, 515–521 (CSAGIGR), and glutamine 559. Cysteine 515 (phosphocysteine intermediate) is an active-site residue.

This sequence belongs to the protein-tyrosine phosphatase family. Non-receptor class 3 subfamily.

It localises to the cytoplasm. The catalysed reaction is O-phospho-L-tyrosyl-[protein] + H2O = L-tyrosyl-[protein] + phosphate. Protein-tyrosine phosphatase that could participate in the transfer of hydrophobic ligands or in functions of the Golgi apparatus. The polypeptide is Tyrosine-protein phosphatase non-receptor type 9 (Ptpn9) (Rattus norvegicus (Rat)).